The sequence spans 152 residues: MARMYARRRGTSSSVRPYRKEAPEWSNTDATEIEKIVVDLRKDGMSTSQIGLVLRDRYAVPDVKLATGKRIGEILREKGLESEIPEDLRNLMEKALGIRKHLAENNKDVHNKRQLQIAESKVRRLVKYYVRSGRMPKGWTYKPETAEILLTR.

Residues 1 to 10 are compositionally biased toward basic residues; the sequence is MARMYARRRG. A disordered region spans residues 1–24; that stretch reads MARMYARRRGTSSSVRPYRKEAPE.

This sequence belongs to the universal ribosomal protein uS15 family. As to quaternary structure, part of the 30S ribosomal subunit.

The chain is Small ribosomal subunit protein uS15 from Methanoculleus marisnigri (strain ATCC 35101 / DSM 1498 / JR1).